Consider the following 1161-residue polypeptide: MKSVLHQIGKTSLAAALSGAVLLSAQTTHAAALSVSQQPLMLIQGVAPNMLVTLDDSGSMAFAYAPDSISGYGNYTFFASNSFNPMYFDPNTQYKLPKKLTLVNGQVQIQDYPAPNFSSAWRNGFTRSGSINLSNSYKVTIEYGRGYDKESTIKADAAYYYDFTGSSSCNRTNQACYTRRYVSTEQRQNFANWYSFYRTRALATQTAANLAFYSLPENARVSWQLLNDSNCNQMGSGSSSGNCFSNYLRDFTGQHRVNFFNWLEKLSVNGGTPLRQAMTRAGEFLKKTGVNGPYAYRPGTQTAPEYSCRGSYHILMTDGLWNNDSANVGNADSTARNLPDGKSYSSQTPYRDGTFDTLADQAFHYWATDARPDIDDNIKPYIPYPDQANPSAEYWNPRNDPATWQHMVTYTLGLGLTTSLTSPRWEGSTFSGGYNDIVAGNLSWPRASNNDSNNVYDLWHAAVNSRGEFFSADSPDQLVAAFQDILNRISGKDLPASRPAISSSLQEDDTGDKLTRFAYQTSFASDKNWAGDLTRYSLTTQDKATVQTKLWSAQSILDAMPNGGAGRKIMMAGSGTSGLKEFTWGSLSADQQRQLNRDPDRNDVADTKGQDRVAFLRGDRRKENSDNFRTRNSILGDIINSSPATVGKAQYLTYLAQPIEPSGNYSTFAEAQKTRAPRVYVGANDGMLHGFDTDGNETFAFIPSAVFEKLHKLTARGYQGGAHQFYVDGSPVVADAFFGGAWHTVLIGSLRAGGKGLFALDVTDPANIKLLWEIGVDQEPDLGYSFPKPTVARLHNGKWAVVTGNGYSSLNDKAALLIIDLETGAITRKLEVTGRTGVPNGLSSPRLADNNSDGVADYAYAGDLQGNLWRFDLIAGKVNQDDPFSRANDGPAVASSFRVSFGGQPLYSAVDSAGAAQAITAAPSLVRHPTRKGYIVIFGTGKYFENADARADTSRAQTLYGIWDQQTKGEAAGSTPRLTRGNLQQQTLDLQADSTFASTARTIRIASQNPVNWLNNDGSTKQSGWYLDFMVNGTLKGEMLIEDMIAIGQVVLLQTITPNDDPCADGASNWTYGLDPYTGGRTSFTVFDLARQGVVDSKSDYSYNKQNVAVSGTEQKGLGGLTLSTNEQGNPEVCSSGECLTVNPGPNTRGRQNWRPIEGKN.

An N-terminal signal peptide occupies residues 1–30; the sequence is MKSVLHQIGKTSLAAALSGAVLLSAQTTHA. Residues D598, D600, N602, and D606 each coordinate Ca(2+). The integrin-binding motif RGD stretch occupies residues 617 to 619; sequence RGD. The Ca(2+) site is built by D849, N851, D853, V855, and D857. Residues 1136 to 1161 form a disordered region; it reads SGECLTVNPGPNTRGRQNWRPIEGKN.

The protein belongs to the PilY1 family. In terms of assembly, interacts (via C-terminus) with host integrins alpha-V/beta-3 (ITGAV/ITGB3) and alpha-V/beta-5 (ITGAV/ITGB5).

It localises to the fimbrium. The protein resides in the membrane. It is found in the cytoplasm. The protein localises to the cytosol. Its function is as follows. Involved in pilus assembly, twitching motility and adhesion to host cells. Primes type IV pili (T4P) assembly and is required for inclusion of minor pilins PilV, PilW and PilX to the surface pili. Stabilizes assembled pilus fibers likely by antagonizing retraction mediated by PilT. Calcium-binding and calcium release by PilY1 seem to be essential for twitching motility and for regulation of pilus retraction dynamics of PilT. This chain is Type IV pilus biogenesis factor PilY1, found in Pseudomonas aeruginosa (strain ATCC 15692 / DSM 22644 / CIP 104116 / JCM 14847 / LMG 12228 / 1C / PRS 101 / PAO1).